Reading from the N-terminus, the 74-residue chain is ATP synthase subunit c (74 aa).

The next 2 helical transmembrane spans lie at 8–28 (FIGIGFMAIGMYGAALGVSNI) and 52–72 (IGAGLAEAMGLFSFVIAMLLI).

It belongs to the ATPase C chain family. F-type ATPases have 2 components, F(1) - the catalytic core - and F(0) - the membrane proton channel. F(1) has five subunits: alpha(3), beta(3), gamma(1), delta(1), epsilon(1). F(0) has three main subunits: a(1), b(2) and c(10-14). The alpha and beta chains form an alternating ring which encloses part of the gamma chain. F(1) is attached to F(0) by a central stalk formed by the gamma and epsilon chains, while a peripheral stalk is formed by the delta and b chains.

It localises to the cell inner membrane. In terms of biological role, f(1)F(0) ATP synthase produces ATP from ADP in the presence of a proton or sodium gradient. F-type ATPases consist of two structural domains, F(1) containing the extramembraneous catalytic core and F(0) containing the membrane proton channel, linked together by a central stalk and a peripheral stalk. During catalysis, ATP synthesis in the catalytic domain of F(1) is coupled via a rotary mechanism of the central stalk subunits to proton translocation. Functionally, key component of the F(0) channel; it plays a direct role in translocation across the membrane. A homomeric c-ring of between 10-14 subunits forms the central stalk rotor element with the F(1) delta and epsilon subunits. The polypeptide is ATP synthase subunit c (Rickettsia prowazekii (strain Madrid E)).